The following is a 344-amino-acid chain: Methionine import ATP-binding protein MetN (344 aa).

The 240-residue stretch at isoleucine 2–isoleucine 241 folds into the ABC transporter domain. ATP is bound at residue glycine 38 to serine 45.

The protein belongs to the ABC transporter superfamily. Methionine importer (TC 3.A.1.24) family. As to quaternary structure, the complex is composed of two ATP-binding proteins (MetN), two transmembrane proteins (MetI) and a solute-binding protein (MetQ).

It is found in the cell inner membrane. It carries out the reaction L-methionine(out) + ATP + H2O = L-methionine(in) + ADP + phosphate + H(+). The enzyme catalyses D-methionine(out) + ATP + H2O = D-methionine(in) + ADP + phosphate + H(+). Functionally, part of the ABC transporter complex MetNIQ involved in methionine import. Responsible for energy coupling to the transport system. The protein is Methionine import ATP-binding protein MetN of Burkholderia thailandensis (strain ATCC 700388 / DSM 13276 / CCUG 48851 / CIP 106301 / E264).